The following is a 526-amino-acid chain: MLO-like protein 1 (526 aa).

Residues 1–11 are Extracellular-facing; the sequence is MGHGGEGMSLE. A helical transmembrane segment spans residues 12–32; it reads FTPTWVVAGVCTVIVAISLAV. Topologically, residues 33 to 61 are cytoplasmic; that stretch reads ERLLHYFGTVLKKKKQKPLYEALQKVKEE. A helical membrane pass occupies residues 62-82; that stretch reads LMLLGFISLLLTVFQGLISKF. The Extracellular portion of the chain corresponds to 83 to 160; sequence CVKENVLMHM…LSLEALHHLH (78 aa). The helical transmembrane segment at 161-181 threads the bilayer; sequence IFIFVLAISHVTFCVLTVIFG. At 182 to 287 the chain is on the cytoplasmic side; it reads STRIHQWKKW…MRALEDDFKQ (106 aa). Helical transmembrane passes span 288 to 308 and 309 to 329; these read VVGI…LNVN and GWHT…AVGT. Topologically, residues 330–372 are cytoplasmic; that stretch reads KLEHVIAQLAHEVAEKHVAIEGDLVVKPSDEHFWFSKPQIVLY. A helical transmembrane segment spans residues 373–393; that stretch reads LIHFILFQNAFEIAFFFWIWV. Topologically, residues 394-412 are extracellular; it reads TYGFDSCIMGQVRYIVPRL. A helical transmembrane segment spans residues 413–433; it reads VIGVFIQVLCSYSTLPLYAIV. At 434 to 526 the chain is on the cytoplasmic side; it reads SQMGSSFKKA…NNEITPDHNN (93 aa). The calmodulin-binding stretch occupies residues 447-468; it reads ENVQVGLVGWAQKVKQKRDLKA. The interval 471 to 526 is disordered; the sequence is SNGDEGSSQAGPGPDSGSGSAPAAGPGAGFAGIQLSRVTRNNAGDTNNEITPDHNN. Positions 476–495 are enriched in low complexity; sequence GSSQAGPGPDSGSGSAPAAG. Residues 506 to 520 are compositionally biased toward polar residues; sequence SRVTRNNAGDTNNEI.

This sequence belongs to the MLO family.

It localises to the cell membrane. Functionally, may be involved in modulation of pathogen defense and leaf cell death. Activity seems to be regulated by Ca(2+)-dependent calmodulin binding and seems not to require heterotrimeric G proteins. The sequence is that of MLO-like protein 1 (MLO1) from Arabidopsis thaliana (Mouse-ear cress).